The following is a 364-amino-acid chain: Aminomethyltransferase (364 aa).

The protein belongs to the GcvT family. As to quaternary structure, the glycine cleavage system is composed of four proteins: P, T, L and H.

The catalysed reaction is N(6)-[(R)-S(8)-aminomethyldihydrolipoyl]-L-lysyl-[protein] + (6S)-5,6,7,8-tetrahydrofolate = N(6)-[(R)-dihydrolipoyl]-L-lysyl-[protein] + (6R)-5,10-methylene-5,6,7,8-tetrahydrofolate + NH4(+). Its function is as follows. The glycine cleavage system catalyzes the degradation of glycine. This Thermotoga sp. (strain RQ2) protein is Aminomethyltransferase.